Consider the following 545-residue polypeptide: Capsular polysaccharide phosphotransferase SacB (545 aa).

It belongs to the stealth family.

In terms of biological role, part of a capsular biosynthesis operon and has been suggested to be the polymerase that links individual UDP-N-acetyl-D-mannosamine monomers. In serotype A the capsule is composed of repeated units of (alpha 1-6)-linked N-acetyl-D-mannosamine-1-phosphate. Non-polar disruption of this open reading frame prevented capsule synthesis. This chain is Capsular polysaccharide phosphotransferase SacB (sacB), found in Neisseria meningitidis serogroup A.